We begin with the raw amino-acid sequence, 333 residues long: Olfactory receptor 1078 (333 aa).

The Extracellular portion of the chain corresponds to 1-25 (MDSSNRTRVSEFLLLGFVENKDLQP). The N-linked (GlcNAc...) asparagine glycan is linked to asparagine 5. The chain crosses the membrane as a helical span at residues 26 to 50 (LIYGLFLSMYLVTVIGNISIIVAII). Residues 51 to 57 (SDPCLHT) are Cytoplasmic-facing. The chain crosses the membrane as a helical span at residues 58–79 (PMYFFLSNLSFVDICFISTTVP). At 80–100 (KMLVNIQTQNNVITYAGCITQ) the chain is on the extracellular side. Residues cysteine 97 and cysteine 189 are joined by a disulfide bond. A helical membrane pass occupies residues 101-120 (IYFFLLFVELDNFLLTIMAY). Topologically, residues 121–139 (DRYVAICHPMHYTVIMNYK) are cytoplasmic. A helical membrane pass occupies residues 140-158 (LCGFLVLVSWIVSVLHALF). Residues 159 to 196 (QSLMMLALPFCTHLEIPHYFCEPNQVIQLTCSDAFLND) lie on the Extracellular side of the membrane. Residues 197–219 (LVIYFTLVLLATVPLAGIFYSYF) traverse the membrane as a helical segment. Residues 220-236 (KIVSSICAISSVHGKYK) lie on the Cytoplasmic side of the membrane. Residues 237-260 (AFSTCASHLSVVSLFYCTGLGVYL) form a helical membrane-spanning segment. At 261–272 (SSAANNSSQASA) the chain is on the extracellular side. Residues 273–292 (TASVMYTVVTPMVNPFIYSL) form a helical membrane-spanning segment. Residues 293–333 (RNKDVKSVLKKTLCEEVIRSPPSLLHFFLVLCHLPCFIFCY) are Cytoplasmic-facing.

It belongs to the G-protein coupled receptor 1 family. In terms of tissue distribution, olfactory epithelium.

The protein localises to the cell membrane. Odorant receptor. The polypeptide is Olfactory receptor 1078 (Olr1078) (Rattus norvegicus (Rat)).